The chain runs to 451 residues: Bifunctional protein GlmU (451 aa).

A pyrophosphorylase region spans residues 1 to 226 (MVAVAILAAG…YLEISGINDR (226 aa)). Residues 7 to 10 (LAAG), Lys21, Gln73, and 78 to 79 (GT) contribute to the UDP-N-acetyl-alpha-D-glucosamine site. Asp103 serves as a coordination point for Mg(2+). Residues Gly140, Glu155, Asn170, and Asn224 each contribute to the UDP-N-acetyl-alpha-D-glucosamine site. A Mg(2+)-binding site is contributed by Asn224. Positions 227–247 (KQLATAYDILQNRIKDYWMRA) are linker. An N-acetyltransferase region spans residues 248-451 (GVTLIDPDSI…ISGWRMKTDD (204 aa)). 2 residues coordinate UDP-N-acetyl-alpha-D-glucosamine: Arg329 and Lys347. The active-site Proton acceptor is His359. UDP-N-acetyl-alpha-D-glucosamine-binding residues include Tyr362 and Asn373. Acetyl-CoA-binding positions include Ala376, 382–383 (NY), Ala419, and Arg436.

This sequence in the N-terminal section; belongs to the N-acetylglucosamine-1-phosphate uridyltransferase family. In the C-terminal section; belongs to the transferase hexapeptide repeat family. As to quaternary structure, homotrimer. Mg(2+) serves as cofactor.

It is found in the cytoplasm. It carries out the reaction alpha-D-glucosamine 1-phosphate + acetyl-CoA = N-acetyl-alpha-D-glucosamine 1-phosphate + CoA + H(+). The catalysed reaction is N-acetyl-alpha-D-glucosamine 1-phosphate + UTP + H(+) = UDP-N-acetyl-alpha-D-glucosamine + diphosphate. It functions in the pathway nucleotide-sugar biosynthesis; UDP-N-acetyl-alpha-D-glucosamine biosynthesis; N-acetyl-alpha-D-glucosamine 1-phosphate from alpha-D-glucosamine 6-phosphate (route II): step 2/2. The protein operates within nucleotide-sugar biosynthesis; UDP-N-acetyl-alpha-D-glucosamine biosynthesis; UDP-N-acetyl-alpha-D-glucosamine from N-acetyl-alpha-D-glucosamine 1-phosphate: step 1/1. It participates in bacterial outer membrane biogenesis; LPS lipid A biosynthesis. Catalyzes the last two sequential reactions in the de novo biosynthetic pathway for UDP-N-acetylglucosamine (UDP-GlcNAc). The C-terminal domain catalyzes the transfer of acetyl group from acetyl coenzyme A to glucosamine-1-phosphate (GlcN-1-P) to produce N-acetylglucosamine-1-phosphate (GlcNAc-1-P), which is converted into UDP-GlcNAc by the transfer of uridine 5-monophosphate (from uridine 5-triphosphate), a reaction catalyzed by the N-terminal domain. In Gloeothece citriformis (strain PCC 7424) (Cyanothece sp. (strain PCC 7424)), this protein is Bifunctional protein GlmU.